Reading from the N-terminus, the 338-residue chain is Lipoate-protein ligase A (338 aa).

A BPL/LPL catalytic domain is found at Pro-29–Cys-216. Residues Arg-71, Gly-76–Phe-79, and Lys-134 each bind ATP. Lys-134 provides a ligand contact to (R)-lipoate.

Belongs to the LplA family. In terms of assembly, monomer.

Its subcellular location is the cytoplasm. It carries out the reaction L-lysyl-[lipoyl-carrier protein] + (R)-lipoate + ATP = N(6)-[(R)-lipoyl]-L-lysyl-[lipoyl-carrier protein] + AMP + diphosphate + H(+). It functions in the pathway protein modification; protein lipoylation via exogenous pathway; protein N(6)-(lipoyl)lysine from lipoate: step 1/2. The protein operates within protein modification; protein lipoylation via exogenous pathway; protein N(6)-(lipoyl)lysine from lipoate: step 2/2. Catalyzes both the ATP-dependent activation of exogenously supplied lipoate to lipoyl-AMP and the transfer of the activated lipoyl onto the lipoyl domains of lipoate-dependent enzymes. The polypeptide is Lipoate-protein ligase A (Pectobacterium carotovorum subsp. carotovorum (strain PC1)).